We begin with the raw amino-acid sequence, 402 residues long: S-adenosylmethionine synthase (402 aa).

His16 contacts ATP. Asp18 contributes to the Mg(2+) binding site. Glu44 is a K(+) binding site. Positions 57 and 103 each coordinate L-methionine. Residues 103 to 113 are flexible loop; sequence QSPDIAQGVDT. Residues 178-180, 249-250, Asp258, 264-265, Ala281, and Lys285 contribute to the ATP site; these read DGK, KF, and RK. Asp258 serves as a coordination point for L-methionine. Residue Lys289 participates in L-methionine binding.

It belongs to the AdoMet synthase family. Homotetramer; dimer of dimers. Mg(2+) serves as cofactor. The cofactor is K(+).

Its subcellular location is the cytoplasm. The enzyme catalyses L-methionine + ATP + H2O = S-adenosyl-L-methionine + phosphate + diphosphate. The protein operates within amino-acid biosynthesis; S-adenosyl-L-methionine biosynthesis; S-adenosyl-L-methionine from L-methionine: step 1/1. In terms of biological role, catalyzes the formation of S-adenosylmethionine (AdoMet) from methionine and ATP. The overall synthetic reaction is composed of two sequential steps, AdoMet formation and the subsequent tripolyphosphate hydrolysis which occurs prior to release of AdoMet from the enzyme. The polypeptide is S-adenosylmethionine synthase (Mycolicibacterium vanbaalenii (strain DSM 7251 / JCM 13017 / BCRC 16820 / KCTC 9966 / NRRL B-24157 / PYR-1) (Mycobacterium vanbaalenii)).